The sequence spans 645 residues: Acetyl-coenzyme A synthetase (645 aa).

CoA contacts are provided by residues 190-193 (RGGR) and Thr-308. ATP contacts are provided by residues 384-386 (GEP), 408-413 (DTWWQT), Asp-497, and Arg-512. Position 520 (Ser-520) interacts with CoA. Arg-523 contacts ATP. Mg(2+) is bound by residues Val-534, His-536, and Val-539. An N6-acetyllysine modification is found at Lys-606.

Belongs to the ATP-dependent AMP-binding enzyme family. Mg(2+) is required as a cofactor. In terms of processing, acetylated. Deacetylation by the SIR2-homolog deacetylase activates the enzyme.

The enzyme catalyses acetate + ATP + CoA = acetyl-CoA + AMP + diphosphate. Functionally, catalyzes the conversion of acetate into acetyl-CoA (AcCoA), an essential intermediate at the junction of anabolic and catabolic pathways. AcsA undergoes a two-step reaction. In the first half reaction, AcsA combines acetate with ATP to form acetyl-adenylate (AcAMP) intermediate. In the second half reaction, it can then transfer the acetyl group from AcAMP to the sulfhydryl group of CoA, forming the product AcCoA. This chain is Acetyl-coenzyme A synthetase, found in Halorhodospira halophila (strain DSM 244 / SL1) (Ectothiorhodospira halophila (strain DSM 244 / SL1)).